Here is a 233-residue protein sequence, read N- to C-terminus: tRNA (guanine-N(7)-)-methyltransferase (233 aa).

Residues glutamate 62, glutamate 87, aspartate 116, and aspartate 138 each contribute to the S-adenosyl-L-methionine site. Residue aspartate 138 is part of the active site. Residues lysine 142, aspartate 174, and 212 to 215 contribute to the substrate site; that span reads TRYE.

It belongs to the class I-like SAM-binding methyltransferase superfamily. TrmB family.

It catalyses the reaction guanosine(46) in tRNA + S-adenosyl-L-methionine = N(7)-methylguanosine(46) in tRNA + S-adenosyl-L-homocysteine. It functions in the pathway tRNA modification; N(7)-methylguanine-tRNA biosynthesis. Its function is as follows. Catalyzes the formation of N(7)-methylguanine at position 46 (m7G46) in tRNA. This is tRNA (guanine-N(7)-)-methyltransferase from Bartonella quintana (strain Toulouse) (Rochalimaea quintana).